The sequence spans 252 residues: Secreted LysM effector LysM1 (252 aa).

Residues 20–64 (FAIPGDPGDTCDTLSDRWGITIDIFKSLNPGVNCPNLVANMEYCV) enclose the LysM 1 domain. The disordered stretch occupies residues 71–98 (DTPSTTTTAKPTMTPTSTPTKTTTTSTA). The segment covering 72–98 (TPSTTTTAKPTMTPTSTPTKTTTTSTA) has biased composition (low complexity). 2 consecutive LysM domains span residues 126-172 (KFHL…YVCV) and 204-250 (KFHL…YVCI).

This sequence belongs to the secreted LysM effector family.

It localises to the secreted. It is found in the cell wall. In terms of biological role, secreted effector that binds two substrates, chitin and N-linked oligosaccharides associated with human skin glycoproteins. Could provide the pathogen with three important functions including shielding host cell wall chitin from the human immune system, shielding the pathogen's glycoproteins from host degradation and immune surveillance, and helping facilitate pathogen adhesion to human skin. This Trichophyton rubrum (strain ATCC MYA-4607 / CBS 118892) (Athlete's foot fungus) protein is Secreted LysM effector LysM1.